The primary structure comprises 109 residues: MTYVVTDECVKCKYTDCVEVCPVDCFYEGEFMLVINPDECIDCGVCVPDCPIDAIKPESPELIEWVERAKDFIENHGWKNITKKKCALPGADKFKDEKDKFNKYIIKKT.

4Fe-4S ferredoxin-type domains are found at residues 2-30 (TYVV…YEGE) and 31-60 (FMLV…PESP). [3Fe-4S] cluster is bound by residues Cys-9 and Cys-17. 4 residues coordinate [4Fe-4S] cluster: Cys-21, Cys-40, Cys-43, and Cys-46. A [3Fe-4S] cluster-binding site is contributed by Cys-50.

It depends on [4Fe-4S] cluster as a cofactor. [3Fe-4S] cluster is required as a cofactor.

Ferredoxins are iron-sulfur proteins that transfer electrons in a wide variety of metabolic reactions. This chain is Ferredoxin (fdxA), found in Rickettsia prowazekii (strain Madrid E).